Here is a 261-residue protein sequence, read N- to C-terminus: Triosephosphate isomerase (261 aa).

Residue 10–12 (NWK) coordinates substrate. The active-site Electrophile is the H100. E172 acts as the Proton acceptor in catalysis. Substrate is bound by residues G178, S218, and 239-240 (GG).

It belongs to the triosephosphate isomerase family. Homodimer.

It localises to the cytoplasm. The catalysed reaction is D-glyceraldehyde 3-phosphate = dihydroxyacetone phosphate. The protein operates within carbohydrate biosynthesis; gluconeogenesis. Its pathway is carbohydrate degradation; glycolysis; D-glyceraldehyde 3-phosphate from glycerone phosphate: step 1/1. Its function is as follows. Involved in the gluconeogenesis. Catalyzes stereospecifically the conversion of dihydroxyacetone phosphate (DHAP) to D-glyceraldehyde-3-phosphate (G3P). The protein is Triosephosphate isomerase of Mycobacterium avium (strain 104).